Here is a 353-residue protein sequence, read N- to C-terminus: Uroporphyrinogen decarboxylase (353 aa).

Residues 27-31 (RQAGR), Phe-46, Asp-76, Tyr-152, Ser-207, and His-321 each bind substrate.

Belongs to the uroporphyrinogen decarboxylase family. In terms of assembly, homodimer.

The protein localises to the cytoplasm. It carries out the reaction uroporphyrinogen III + 4 H(+) = coproporphyrinogen III + 4 CO2. It participates in porphyrin-containing compound metabolism; protoporphyrin-IX biosynthesis; coproporphyrinogen-III from 5-aminolevulinate: step 4/4. Its function is as follows. Catalyzes the decarboxylation of four acetate groups of uroporphyrinogen-III to yield coproporphyrinogen-III. The protein is Uroporphyrinogen decarboxylase of Listeria monocytogenes serotype 4b (strain F2365).